We begin with the raw amino-acid sequence, 300 residues long: Ribosomal protein bS6--L-glutamate ligase (300 aa).

An ATP-grasp domain is found at 104 to 287 (MQLLARQGID…IAGKMIRWIE (184 aa)). ATP-binding positions include lysine 141, 178–179 (EY), aspartate 187, and 211–213 (RSN). Positions 248, 260, and 262 each coordinate Mg(2+). Aspartate 248, glutamate 260, and asparagine 262 together coordinate Mn(2+).

It belongs to the RimK family. Mg(2+) is required as a cofactor. The cofactor is Mn(2+).

Its function is as follows. An L-glutamate ligase that catalyzes the ATP-dependent post-translational addition of glutamate residues to the C-terminus of ribosomal protein bS6 (RpsF). Is also able to catalyze the synthesis of poly-alpha-glutamate in vitro, via ATP hydrolysis from unprotected glutamate as substrate. The number of glutamate residues added to either RpsF or to poly-alpha-glutamate changes with pH. The polypeptide is Ribosomal protein bS6--L-glutamate ligase (Escherichia fergusonii (strain ATCC 35469 / DSM 13698 / CCUG 18766 / IAM 14443 / JCM 21226 / LMG 7866 / NBRC 102419 / NCTC 12128 / CDC 0568-73)).